We begin with the raw amino-acid sequence, 524 residues long: REH2-associated factor 1 (524 aa).

A mitochondrion-targeting transit peptide spans 1-22 (MRRWLVASMAPQLHQLLQPVRR). A C2H2-type 1; atypical zinc finger spans residues 48–70 (ASCPACSRVVHMCDMLTHLITAH). The segment at 121-147 (YMCNWCDRRSDVYATRDKFLKHVADVH) adopts a C2H2-type 2; atypical zinc-finger fold. The C2H2-type 4 zinc-finger motif lies at 226-249 (FPCELCNRTFNSEIDLLQHLETRH). A C2H2-type 3; atypical zinc finger spans residues 286–312 (VICDLCVSSSKVYKMPSALFSHIRFKH). 4 C2H2-type zinc fingers span residues 334-357 (FVCTVCQKAFASAAALDGHFNSKH), 376-399 (WWCHDCEKGFSSAKGLHGHMQNKH), 406-429 (HPCPACKRVFADIYSLEEHLSLQH), and 443-465 (VKCSTCERFFLSHEDLHRHAVKH). The disordered stretch occupies residues 463-524 (VKHHKKDPRA…KTTEVSEVTS (62 aa)). Low complexity predominate over residues 479–500 (APTSASHVAASTSAAVPSEVEA).

In terms of assembly, component of the REH2-associated complex (REH2C) composed of helicase REH2, associated factors H2F1 and H2F2, and mRNAs at various editing stages; the formation of the complex is RNA-independent. Within the complex, interacts with REH2; the interaction is direct. Interacts with various editing complexes including the RNA editing core (RECC) complex, the gRNA-binding (GRBC) complex (also known as the MRB1 complex) and the RNA editing mediator (REMC) complex.

The protein localises to the mitochondrion. Functionally, plays an important role in mitochondrial mRNA editing by promoting the assembly of the mRNA editosome. Facilitates the recruitment of mRNA to the REH2C complex and promotes the interaction between various editing complexes including REH2C, GRBC, REMC and RECC complexes. The polypeptide is REH2-associated factor 1 (Trypanosoma brucei brucei (strain 927/4 GUTat10.1)).